A 106-amino-acid chain; its full sequence is Large ribosomal subunit protein bL21 (106 aa).

It belongs to the bacterial ribosomal protein bL21 family. As to quaternary structure, part of the 50S ribosomal subunit. Contacts protein L20.

This protein binds to 23S rRNA in the presence of protein L20. This Coprothermobacter proteolyticus (strain ATCC 35245 / DSM 5265 / OCM 4 / BT) protein is Large ribosomal subunit protein bL21.